The following is a 474-amino-acid chain: Aspartyl/glutamyl-tRNA(Asn/Gln) amidotransferase subunit B (474 aa).

It belongs to the GatB/GatE family. GatB subfamily. In terms of assembly, heterotrimer of A, B and C subunits.

It catalyses the reaction L-glutamyl-tRNA(Gln) + L-glutamine + ATP + H2O = L-glutaminyl-tRNA(Gln) + L-glutamate + ADP + phosphate + H(+). The enzyme catalyses L-aspartyl-tRNA(Asn) + L-glutamine + ATP + H2O = L-asparaginyl-tRNA(Asn) + L-glutamate + ADP + phosphate + 2 H(+). In terms of biological role, allows the formation of correctly charged Asn-tRNA(Asn) or Gln-tRNA(Gln) through the transamidation of misacylated Asp-tRNA(Asn) or Glu-tRNA(Gln) in organisms which lack either or both of asparaginyl-tRNA or glutaminyl-tRNA synthetases. The reaction takes place in the presence of glutamine and ATP through an activated phospho-Asp-tRNA(Asn) or phospho-Glu-tRNA(Gln). This Limosilactobacillus reuteri (strain DSM 20016) (Lactobacillus reuteri) protein is Aspartyl/glutamyl-tRNA(Asn/Gln) amidotransferase subunit B.